The primary structure comprises 219 residues: Imidazole glycerol phosphate synthase subunit HisH (219 aa).

Positions 4–216 constitute a Glutamine amidotransferase type-1 domain; that stretch reads TVTVLDYGSG…VDSLPATGRN (213 aa). C82 acts as the Nucleophile in catalysis. Active-site residues include H191 and E193.

In terms of assembly, heterodimer of HisH and HisF.

The protein resides in the cytoplasm. The catalysed reaction is 5-[(5-phospho-1-deoxy-D-ribulos-1-ylimino)methylamino]-1-(5-phospho-beta-D-ribosyl)imidazole-4-carboxamide + L-glutamine = D-erythro-1-(imidazol-4-yl)glycerol 3-phosphate + 5-amino-1-(5-phospho-beta-D-ribosyl)imidazole-4-carboxamide + L-glutamate + H(+). The enzyme catalyses L-glutamine + H2O = L-glutamate + NH4(+). It participates in amino-acid biosynthesis; L-histidine biosynthesis; L-histidine from 5-phospho-alpha-D-ribose 1-diphosphate: step 5/9. In terms of biological role, IGPS catalyzes the conversion of PRFAR and glutamine to IGP, AICAR and glutamate. The HisH subunit catalyzes the hydrolysis of glutamine to glutamate and ammonia as part of the synthesis of IGP and AICAR. The resulting ammonia molecule is channeled to the active site of HisF. The polypeptide is Imidazole glycerol phosphate synthase subunit HisH (Renibacterium salmoninarum (strain ATCC 33209 / DSM 20767 / JCM 11484 / NBRC 15589 / NCIMB 2235)).